Consider the following 253-residue polypeptide: DNA polymerase III subunit epsilon (253 aa).

Residues aspartate 14 and glutamate 16 each contribute to the a divalent metal cation site. The substrate site is built by aspartate 14, glutamate 16, aspartate 63, and histidine 68. Histidine 163 functions as the Proton acceptor in the catalytic mechanism. A divalent metal cation is bound at residue aspartate 168. Aspartate 168 lines the substrate pocket.

DNA polymerase III contains a core (composed of alpha, epsilon and theta chains) that associates with a tau subunit. This core dimerizes to form the POLIII' complex. PolIII' associates with the gamma complex (composed of gamma, delta, delta', psi and chi chains) and with the beta chain to form the complete DNA polymerase III complex. Mg(2+) serves as cofactor. Mn(2+) is required as a cofactor.

The catalysed reaction is DNA(n) + a 2'-deoxyribonucleoside 5'-triphosphate = DNA(n+1) + diphosphate. Functionally, DNA polymerase III is a complex, multichain enzyme responsible for most of the replicative synthesis in bacteria. The epsilon subunit contain the editing function and is a proofreading 3'-5' exonuclease. The polypeptide is DNA polymerase III subunit epsilon (dnaQ) (Pasteurella multocida (strain Pm70)).